The chain runs to 155 residues: Transcription antitermination protein NusB (155 aa).

The protein belongs to the NusB family.

Functionally, involved in transcription antitermination. Required for transcription of ribosomal RNA (rRNA) genes. Binds specifically to the boxA antiterminator sequence of the ribosomal RNA (rrn) operons. The polypeptide is Transcription antitermination protein NusB (Ralstonia nicotianae (strain ATCC BAA-1114 / GMI1000) (Ralstonia solanacearum)).